The sequence spans 243 residues: Adenosylcobinamide-GDP ribazoletransferase (243 aa).

5 consecutive transmembrane segments (helical) span residues Leu31–Leu48, Ala61–Ala81, Ile109–Ile129, Gly134–Cys154, and Leu188–Trp208.

The protein belongs to the CobS family. The cofactor is Mg(2+).

Its subcellular location is the cell inner membrane. It catalyses the reaction alpha-ribazole + adenosylcob(III)inamide-GDP = adenosylcob(III)alamin + GMP + H(+). It carries out the reaction alpha-ribazole 5'-phosphate + adenosylcob(III)inamide-GDP = adenosylcob(III)alamin 5'-phosphate + GMP + H(+). Its pathway is cofactor biosynthesis; adenosylcobalamin biosynthesis; adenosylcobalamin from cob(II)yrinate a,c-diamide: step 7/7. Joins adenosylcobinamide-GDP and alpha-ribazole to generate adenosylcobalamin (Ado-cobalamin). Also synthesizes adenosylcobalamin 5'-phosphate from adenosylcobinamide-GDP and alpha-ribazole 5'-phosphate. The sequence is that of Adenosylcobinamide-GDP ribazoletransferase from Pseudomonas fluorescens (strain ATCC BAA-477 / NRRL B-23932 / Pf-5).